The following is a 355-amino-acid chain: Cyanide hydratase (355 aa).

The CN hydrolase domain occupies 6–286; the sequence is YKAAAVTSEP…GLLFVDIDLN (281 aa). The Proton acceptor role is filled by E46. Residue K128 is part of the active site. C163 (nucleophile) is an active-site residue.

Belongs to the carbon-nitrogen hydrolase superfamily. Nitrilase family. In terms of assembly, oligomer of dimers, forming left-handed helical fibers.

The catalysed reaction is formamide = hydrogen cyanide + H2O. Its function is as follows. Catalyzes the hydration of cyanide to formamide. Degradation of cyanide may be important for plant pathogenic fungi in infection of cyanogenic plants. Also has low but significant nitrilase activity with acetonitrile, propionitrile and benzonitrile. The sequence is that of Cyanide hydratase from Gibberella baccata (Fusarium lateritium).